The following is a 293-amino-acid chain: Protein transport protein yif1 (293 aa).

Over 1-139 (MPPKLYHPQP…PPAEDLNSPD (139 aa)) the chain is Cytoplasmic. A helical transmembrane segment spans residues 140-160 (MYIPLMAFTTHILLLCALAGL). Topologically, residues 161–175 (QDDFQPELFGLRASK) are lumenal. The helical transmembrane segment at 176–196 (ACAVVLVEFLATRLGCYLLNI) threads the bilayer. The Cytoplasmic portion of the chain corresponds to 197–201 (SSQSQ). Residues 202–222 (VLDLLAFSGYKFVGLILTSLS) traverse the membrane as a helical segment. Residues 223–226 (KLFE) are Lumenal-facing. Residues 227–247 (MPWVTRFVFLYMYLATAFFLL) form a helical membrane-spanning segment. Topologically, residues 248 to 271 (RSLKYAVLPESTMAINATITSHQR) are cytoplasmic. A helical transmembrane segment spans residues 272-292 (SRRIYFLFFIAASQILFMYVL). A topological domain (lumenal) is located at residue Ser293.

It belongs to the YIF1 family. In terms of assembly, component of the yip1-yif1 complex, composed of at least yif1, yip1 and yos1. The complex interacts with the ER to Golgi SNAREs bos1 and sec22.

The protein resides in the endoplasmic reticulum membrane. It localises to the golgi apparatus membrane. It is found in the cytoplasmic vesicle. The protein localises to the COPII-coated vesicle. Its function is as follows. Required for fusion of ER-derived vesicles with the Golgi during ER-to-Golgi protein transport. May be involved in proper membrane localization of Rab GTPases. The protein is Protein transport protein yif1 of Schizosaccharomyces pombe (strain 972 / ATCC 24843) (Fission yeast).